The sequence spans 312 residues: Pantothenate kinase (312 aa).

97 to 104 (GSVAVGKS) serves as a coordination point for ATP.

The protein belongs to the prokaryotic pantothenate kinase family.

Its subcellular location is the cytoplasm. The catalysed reaction is (R)-pantothenate + ATP = (R)-4'-phosphopantothenate + ADP + H(+). Its pathway is cofactor biosynthesis; coenzyme A biosynthesis; CoA from (R)-pantothenate: step 1/5. The polypeptide is Pantothenate kinase (Corynebacterium glutamicum (strain ATCC 13032 / DSM 20300 / JCM 1318 / BCRC 11384 / CCUG 27702 / LMG 3730 / NBRC 12168 / NCIMB 10025 / NRRL B-2784 / 534)).